A 225-amino-acid polypeptide reads, in one-letter code: Ribonuclease 3 (225 aa).

The RNase III domain maps to 4–127 (IEKLEQSLTY…IIGAIHLEAG (124 aa)). Glu40 provides a ligand contact to Mg(2+). Asp44 is an active-site residue. Asp113 and Glu116 together coordinate Mg(2+). Glu116 is a catalytic residue. The 70-residue stretch at 154–223 (DYKTKLQEIT…AKIALEKLGS (70 aa)) folds into the DRBM domain.

Belongs to the ribonuclease III family. Homodimer. The cofactor is Mg(2+).

It is found in the cytoplasm. The enzyme catalyses Endonucleolytic cleavage to 5'-phosphomonoester.. In terms of biological role, digests double-stranded RNA. Involved in the processing of primary rRNA transcript to yield the immediate precursors to the large and small rRNAs (23S and 16S). Processes some mRNAs, and tRNAs when they are encoded in the rRNA operon. Processes pre-crRNA and tracrRNA of type II CRISPR loci if present in the organism. This is Ribonuclease 3 from Campylobacter jejuni subsp. doylei (strain ATCC BAA-1458 / RM4099 / 269.97).